Reading from the N-terminus, the 122-residue chain is Large ribosomal subunit protein uL14 (122 aa).

This sequence belongs to the universal ribosomal protein uL14 family. Part of the 50S ribosomal subunit. Forms a cluster with proteins L3 and L19. In the 70S ribosome, L14 and L19 interact and together make contacts with the 16S rRNA in bridges B5 and B8.

Binds to 23S rRNA. Forms part of two intersubunit bridges in the 70S ribosome. In Rhodospirillum rubrum (strain ATCC 11170 / ATH 1.1.1 / DSM 467 / LMG 4362 / NCIMB 8255 / S1), this protein is Large ribosomal subunit protein uL14.